The primary structure comprises 153 residues: LOB domain-containing protein 26 (153 aa).

Residues 4–105 (NPCEVCRFQN…EEVSKTKKLL (102 aa)) enclose the LOB domain. The tract at residues 126–153 (KSKPSVLRKRKRKTKSSDESAIRVVEDS) is disordered. Over residues 140–153 (KSSDESAIRVVEDS) the composition is skewed to basic and acidic residues.

This sequence belongs to the LOB domain-containing protein family.

This chain is LOB domain-containing protein 26 (LBD26), found in Arabidopsis thaliana (Mouse-ear cress).